Consider the following 32-residue polypeptide: Chaperone protein DnaK (32 aa).

Belongs to the heat shock protein 70 family.

In terms of biological role, acts as a chaperone. The sequence is that of Chaperone protein DnaK from Anabaena sp. (strain L31).